A 1490-amino-acid polypeptide reads, in one-letter code: ABC transporter CDR4 (1490 aa).

The span at 1-12 shows a compositional bias: polar residues; the sequence is MADADTSSNSSK. Disordered stretches follow at residues 1–26 and 53–75; these read MADA…GTYQ and LKRQ…LSGK. Over 1–516 the chain is Cytoplasmic; sequence MADADTSSNS…NILRIKGNPS (516 aa). Residues 58-67 are compositionally biased toward basic and acidic residues; the sequence is SRQESQKSNE. Residues 151 to 407 form the ABC transporter 1 domain; that stretch reads PKYLSLFFRE…FIDMGYECPQ (257 aa). 6 helical membrane passes run 517–537, 551–571, 601–621, 626–646, 659–679, and 767–787; these read IHLF…SIFY, AALF…IFSL, LPTK…MVNF, GNFF…SHIF, AMTP…FVIP, and FGIV…LCEI. Residues 788-1182 lie on the Cytoplasmic side of the membrane; sequence NKGAMQKGEI…VFEQNWRTPS (395 aa). Residues 846–1090 form the ABC transporter 2 domain; that stretch reads FFWRDLTYQV…LINYFEKYGA (245 aa). 882–889 lines the ATP pocket; it reads GASGAGKT. The next 3 helical transmembrane spans lie at 1183–1203, 1217–1237, and 1268–1288; these read YLYS…FSFY, FSVF…LPTF, and IPWN…PVGL. The N-linked (GlcNAc...) asparagine glycan is linked to Asn-1291. 3 helical membrane-spanning segments follow: residues 1304–1324, 1333–1353, and 1370–1390; these read FMWF…QLCI, AANL…VLVT, and FTYL…VTCA. N-linked (GlcNAc...) asparagine glycosylation occurs at Asn-1424. Residues 1455 to 1475 form a helical membrane-spanning segment; the sequence is IGIYIAFIGINIIGTFILYWF.

The protein belongs to the ABC transporter superfamily. ABCG family. PDR (TC 3.A.1.205) subfamily.

The protein localises to the membrane. This is ABC transporter CDR4 (CDR4) from Candida albicans (Yeast).